The primary structure comprises 392 residues: Homeobox protein engrailed-1 (392 aa).

4 disordered regions span residues 1–100, 132–164, 219–251, and 282–306; these read MEEQ…AQLH, ARGGAGGGGRVERDRGQTAAGRDPVHPLGTRAP, KPSDTGGGGSGGGAGSPGAQGTKYPEHGNPAIL, and SDRPSSGPRTRKLKKKKNEKEDKRP. Residues 14-36 are compositionally biased toward low complexity; it reads SALGAAAAATPGGLSLSLSPGAS. 2 stretches are compositionally biased toward pro residues: residues 51–66 and 75–84; these read SPQPAPPSPPAAPCLP and PPHPPPPPPQ. Low complexity predominate over residues 85 to 100; that stretch reads HLAAPAHQPQPAAQLH. Residues 223-236 are compositionally biased toward gly residues; the sequence is TGGGGSGGGAGSPG. Residues 303-362 constitute a DNA-binding region (homeobox); the sequence is DKRPRTAFTAEQLQRLKAEFQANRYITEQRRQTLAQELSLNESQIKIWFQNKRAKIKKAT.

The protein belongs to the engrailed homeobox family.

The protein localises to the nucleus. Its function is as follows. Required for proper formation of the apical ectodermal ridge and correct dorsal-ventral patterning in the limb. This chain is Homeobox protein engrailed-1 (EN1), found in Homo sapiens (Human).